Here is a 331-residue protein sequence, read N- to C-terminus: Adenosine deaminase (331 aa).

Residues His-12 and His-14 each contribute to the Zn(2+) site. Residues His-14 and Asp-16 each coordinate substrate. Zn(2+) is bound at residue His-197. Glu-200 functions as the Proton donor in the catalytic mechanism. Zn(2+) is bound at residue Asp-278.

Belongs to the metallo-dependent hydrolases superfamily. Adenosine and AMP deaminases family. Adenosine deaminase subfamily. Requires Zn(2+) as cofactor.

The enzyme catalyses adenosine + H2O + H(+) = inosine + NH4(+). It catalyses the reaction 2'-deoxyadenosine + H2O + H(+) = 2'-deoxyinosine + NH4(+). In terms of biological role, catalyzes the hydrolytic deamination of adenosine and 2-deoxyadenosine. This Shewanella halifaxensis (strain HAW-EB4) protein is Adenosine deaminase.